The chain runs to 274 residues: NH(3)-dependent NAD(+) synthetase (274 aa).

ATP is bound at residue 46 to 53; it reads GISGGQDS. Asp-52 is a binding site for Mg(2+). A deamido-NAD(+)-binding site is contributed by Arg-140. Thr-160 serves as a coordination point for ATP. Mg(2+) is bound at residue Glu-165. Lys-173 and Asp-180 together coordinate deamido-NAD(+). Residues Lys-189 and Thr-211 each coordinate ATP. 260-261 provides a ligand contact to deamido-NAD(+); it reads HK.

The protein belongs to the NAD synthetase family. As to quaternary structure, homodimer.

It catalyses the reaction deamido-NAD(+) + NH4(+) + ATP = AMP + diphosphate + NAD(+) + H(+). The protein operates within cofactor biosynthesis; NAD(+) biosynthesis; NAD(+) from deamido-NAD(+) (ammonia route): step 1/1. Catalyzes the ATP-dependent amidation of deamido-NAD to form NAD. Uses ammonia as a nitrogen source. In Streptococcus pneumoniae (strain Hungary19A-6), this protein is NH(3)-dependent NAD(+) synthetase.